Reading from the N-terminus, the 1187-residue chain is Trafficking protein particle complex II-specific subunit 120 homolog (1187 aa).

Residues 1037–1059 (GTTAKTDSSKEPGDGSSRSADES) form a disordered region.

Belongs to the TRS120 family. As to quaternary structure, part of the multisubunit TRAPP (transport protein particle) II complex composed of BET3, BET5, TRS20, TRS23, TRS31, TRS33, TRS65, TRS85, TRS120 and TRS130.

It localises to the golgi apparatus. The protein localises to the trans-Golgi network. Its subcellular location is the early endosome. In terms of biological role, specific subunit of the TRAPP II complex, a highly conserved vesicle tethering complex that is required for the proper transport of proteins in post-Golgi trafficking pathways to the growing cell plate in mitotic active cells. The sequence is that of Trafficking protein particle complex II-specific subunit 120 homolog from Oryza sativa subsp. japonica (Rice).